The chain runs to 1939 residues: Myosin-2 (1939 aa).

In terms of domain architecture, Myosin N-terminal SH3-like spans 33-82 (DAKTSVFVAEPKESFVKGTIQSREGGKVTVKTEAGATLTVKEDQVFPMNP). Thr64 and Thr69 each carry phosphothreonine. In terms of domain architecture, Myosin motor spans 86 to 782 (DKIEDMAMMT…LLGLLEEMRD (697 aa)). Residue Lys130 is modified to N6,N6,N6-trimethyllysine. ATP is bound at residue 179 to 186 (GESGAGKT). Position 389 is a phosphotyrosine (Tyr389). Ser392 is subject to Phosphoserine. The residue at position 419 (Thr419) is a Phosphothreonine. Ser625 is modified (phosphoserine). The interval 659-681 (LNKLMTNLRSTHPHFVRCIIPNE) is actin-binding. His757 is modified (pros-methylhistidine). The tract at residues 761–775 (KFGHTKVFFKAGLLG) is actin-binding. The 30-residue stretch at 785–814 (LAQLITRTQARCRGFLARVEYQKMVERRES) folds into the IQ domain. Residues 843-1939 (LLKSAESEKE…EVHTKVISEE (1097 aa)) are a coiled coil. Residues Ser1092 and Ser1096 each carry the phosphoserine modification. 2 disordered regions span residues 1126–1147 (IEAERASRAKAEKQRSDLSREL) and 1153–1172 (RLEEAGGATSAQIEMNKKRE). Residues 1128–1147 (AERASRAKAEKQRSDLSREL) show a composition bias toward basic and acidic residues. Ser1162 and Ser1237 each carry phosphoserine. Thr1241 is modified (phosphothreonine). The residue at position 1243 (Ser1243) is a Phosphoserine. The residue at position 1255 (Thr1255) is a Phosphothreonine. Ser1261 bears the Phosphoserine mark. Phosphothreonine is present on Thr1286. Phosphoserine is present on residues Ser1288, Ser1292, Ser1303, and Ser1306. Tyr1464 bears the Phosphotyrosine mark. Position 1467 is a phosphothreonine (Thr1467). Residue Ser1474 is modified to Phosphoserine. Tyr1492 is modified (phosphotyrosine). The residue at position 1495 (Ser1495) is a Phosphoserine. Thr1501 bears the Phosphothreonine mark. Residue Ser1514 is modified to Phosphoserine. Thr1517 carries the post-translational modification Phosphothreonine. Phosphoserine occurs at positions 1542, 1554, 1574, 1600, 1603, 1714, and 1726. A phosphothreonine mark is found at Thr1730 and Thr1736. Phosphoserine is present on Ser1739. The segment at 1885–1915 (QAEEAEEQSNTNLSKFRKLQHELEEAEERAD) is disordered.

Belongs to the TRAFAC class myosin-kinesin ATPase superfamily. Myosin family. In terms of assembly, muscle myosin is a hexameric protein that consists of 2 heavy chain subunits (MHC), 2 alkali light chain subunits (MLC) and 2 regulatory light chain subunits (MLC-2). Interacts with GCSAM.

Its subcellular location is the cytoplasm. The protein localises to the myofibril. In terms of biological role, myosins are actin-based motor molecules with ATPase activity essential for muscle contraction. The chain is Myosin-2 (MYH2) from Sus scrofa (Pig).